The primary structure comprises 1616 residues: Myosin-IIIa (1616 aa).

Residues 21-287 (WEITETIGKG…VSELLQHKFI (267 aa)) enclose the Protein kinase domain. ATP is bound by residues 27 to 35 (IGKGTYGKV) and Lys-50. The active-site Proton acceptor is the Asp-150. One can recognise a Myosin motor domain in the interval 338 to 1053 (KDVDDLATLE…HVEQLNLMRK (716 aa)). The tract at residues 934 to 956 (LMDLLSKMVVGQPHFVRCIKPNS) is actin-binding. IQ domains lie at 1055–1084 (AIDK…KRKE), 1082–1111 (RKES…MKNT), and 1346–1375 (EDKA…SSFK). Residues 1401–1479 (EEINNIKKKD…RRVSSQQCLS (79 aa)) form an interaction with MORN4 region. 2 disordered regions span residues 1545-1567 (LPSR…QQEL) and 1581-1616 (AESP…VQQS). 2 stretches are compositionally biased toward basic and acidic residues: residues 1550-1564 (GPKE…RRPQ) and 1583-1592 (SPEKEEEREP). The span at 1602 to 1616 (LLRKTSQRRRLVQQS) shows a compositional bias: basic residues.

The protein in the C-terminal section; belongs to the TRAFAC class myosin-kinesin ATPase superfamily. Myosin family. It in the N-terminal section; belongs to the protein kinase superfamily. STE Ser/Thr protein kinase family. As to quaternary structure, interacts with MORN4. Interacts (via C-terminus) with ESPN and ESPNL. Strongest expression in retina, retinal pigment epithelial cells, cochlea and pancreas.

The protein resides in the cytoplasm. The protein localises to the cytoskeleton. Its subcellular location is the cell projection. It is found in the filopodium tip. It localises to the stereocilium. The catalysed reaction is L-seryl-[protein] + ATP = O-phospho-L-seryl-[protein] + ADP + H(+). It carries out the reaction L-threonyl-[protein] + ATP = O-phospho-L-threonyl-[protein] + ADP + H(+). It catalyses the reaction ATP + H2O = ADP + phosphate + H(+). Actin-dependent motor protein with a protein kinase activity, playing an essential role in hearing. Probably also plays a role in vision. Required for normal cochlear hair bundle development and hearing. Plays an important role in the early steps of cochlear hair bundle morphogenesis. Influences the number and lengths of stereocilia to be produced and limits the growth of microvilli within the forming auditory hair bundles thereby contributing to the architecture of the hair bundle, including its staircase pattern. Involved in the elongation of actin in stereocilia tips by transporting the actin regulatory factor ESPN to the plus ends of actin filaments. The polypeptide is Myosin-IIIa (MYO3A) (Homo sapiens (Human)).